Reading from the N-terminus, the 757-residue chain is RNA-directed RNA polymerase catalytic subunit (757 aa).

The tract at residues 50–82 (SEKGKWTTNTETGAPQLNPIDGPLPEDNEPSGY) is disordered. Positions 55 to 64 (WTTNTETGAP) are enriched in polar residues. Short sequence motifs (nuclear localization signal) lie at residues 187-195 (RKRRVRDNM) and 203-216 (RTIGKKKQRLNKRS). Residues 249–256 (RGFVYFVE) form a promoter-binding site region. Positions 286–483 (VRKMMTNSQD…GINMSKKKSY (198 aa)) constitute a RdRp catalytic domain.

It belongs to the influenza viruses polymerase PB1 family. In terms of assembly, influenza RNA polymerase is composed of three subunits: PB1, PB2 and PA. Interacts (via N-terminus) with PA (via C-terminus). Interacts (via C-terminus) with PB2 (via N-terminus); this interaction is essential for transcription initiation. In terms of processing, phosphorylated by host PRKCA.

The protein resides in the host nucleus. The protein localises to the host cytoplasm. The catalysed reaction is RNA(n) + a ribonucleoside 5'-triphosphate = RNA(n+1) + diphosphate. In terms of biological role, RNA-dependent RNA polymerase which is responsible for replication and transcription of virus RNA segments. The transcription of viral mRNAs occurs by a unique mechanism called cap-snatching. 5' methylated caps of cellular mRNAs are cleaved after 10-13 nucleotides by PA. In turn, these short capped RNAs are used as primers by PB1 for transcription of viral mRNAs. During virus replication, PB1 initiates RNA synthesis and copy vRNA into complementary RNA (cRNA) which in turn serves as a template for the production of more vRNAs. The polypeptide is RNA-directed RNA polymerase catalytic subunit (Aves).